The sequence spans 374 residues: MTTGQRTIVRHAPGKLFVAGEYAVVDPGNPAILVAVDRHISVTVSDADADTGAADVVISSDLGPQAVGWRWHDGRLVVRDPDDGQQARSALAHVVSAIETVGRLLGERGQKVPALTLSVSSRLHEDGRKFGLGSSGAVTVATVAAVAAFCGLELSTDERFRLAMLATAELDPKGSGGDLAASTWGGWIAYQAPDRAFVLDLARRVGVDRTLKAPWPGHSVRRLPAPKGLTLEVGWTGEPASTASLVSDLHRRTWRGSASHQRFVETTTDCVRSAVTALESGDDTSLLHEIRRARQELARLDDEVGLGIFTPKLTALCDAAEAVGGAAKPSGAGGGDCGIALLDAEASRDITHVRQRWETAGVLPLPLTPALEGI.

It belongs to the GHMP kinase family. As to quaternary structure, homodimer. It depends on Mg(2+) as a cofactor.

It catalyses the reaction (R)-5-phosphomevalonate + ATP = (R)-5-diphosphomevalonate + ADP. Its pathway is isoprenoid biosynthesis; isopentenyl diphosphate biosynthesis via mevalonate pathway; isopentenyl diphosphate from (R)-mevalonate: step 2/3. In terms of biological role, catalyzes the phosphorylation of (R)-mevalonate 5-phosphate (MVAP) to (R)-mevalonate 5-diphosphate (MVAPP). Functions in the mevalonate (MVA) pathway leading to isopentenyl diphosphate (IPP), a key precursor for the biosynthesis of isoprenoid compounds. The chain is Phosphomevalonate kinase from Streptomyces sp. (strain CL190).